The chain runs to 272 residues: Insulin-like growth factor-binding protein 1 (272 aa).

The signal sequence occupies residues 1 to 25 (MPEFLTVVSWPFLILLSFQIGVAAG). In terms of domain architecture, IGFBP N-terminal spans 28–109 (QPWHCAPCTA…TRGQGACVPE (82 aa)). 6 cysteine pairs are disulfide-bonded: Cys-32/Cys-59, Cys-35/Cys-61, Cys-43/Cys-62, Cys-50/Cys-65, Cys-73/Cys-86, and Cys-80/Cys-106. Phosphoserine is present on residues Ser-139, Ser-157, and Ser-169. A Phosphothreonine modification is found at Thr-170. A Phosphotyrosine modification is found at Tyr-171. Residues 186–264 (KEPCQRELYK…SLETRGDPNC (79 aa)) enclose the Thyroglobulin type-1 domain. Disulfide bonds link Cys-189–Cys-219, Cys-230–Cys-241, and Cys-243–Cys-264. Ser-255 carries the post-translational modification Phosphoserine. Residues 259–261 (RGD) carry the Cell attachment site motif.

In terms of assembly, binds equally well IGF1 and IGF2. Interacts with integrin ITGA5:ITGB1. Interacts with VHL; this interaction inhibits HIF1A degradation.

The protein resides in the secreted. Its function is as follows. Multifunctional protein that plays a critical role in regulating the availability of IGFs such as IGF1 and IGF2 to their receptors and thereby regulates IGF-mediated cellular processes including cell migration, proliferation, differentiation or apoptosis in a cell-type specific manner. Also plays a positive role in cell migration by interacting with integrin ITGA5:ITGB1 through its RGD motif. Mechanistically, binding to integrins leads to activation of focal adhesion kinase/PTK2 and stimulation of the mitogen-activated protein kinase (MAPK) pathway. Regulates cardiomyocyte apoptosis by suppressing HIF-1alpha/HIF1A ubiquitination and subsequent degradation. The polypeptide is Insulin-like growth factor-binding protein 1 (Igfbp1) (Mus musculus (Mouse)).